The sequence spans 609 residues: MTIDNPSAFLKTLPTGSGVYQMQDAQGKVIYVGKARNLQKRVSSYFRRQLDSKTQAMMAQVQSIQTTITRNENEALLLEASFIKQFRPRYNVLLRDDKSYPYLYLATHQKFPRLDFYRGAKKAPGRYFGPYPNAGSVRENLALIQKLFKLRQCSESFFKNRTRPCLQYQIKRCTAPCVGYVNEQEYRRQVEDAILFFEGKNDQVIIKLTERMEVTSENLVFEEAAHYRDQIRQLRRLQKQQIITGGKGNIDIIGIAESNGAIGFAILFIRSGRMIGHKPFFPNTPLGTTLQTALVEFIPQYYLSPLRNGDIPERIVTSEPLEDRLWIQRALSSGLNRKLAITDQKRAPYKQWQAMAALNAAQALSQHLAQKNTFALKLEAIQKSLALPNPIARIECFDISHTLGEATVASCVVFGEEGPIKKDYRRFNISGVTPGDDYGALRQALTRRYVRLKEGEGILPDVLLIDGGMGQLRQAAEVLEELQVSGVILTAIAKGPGRKAGLEKLFVWGRREEIHLPADNIAFHLIQQIRDEAHRFAITAHCNRRAKRRVESTLQEIEGIGPKRRQKLLKYFGGLQELQRASIEEIARVPGVSETLAKAIYDACHQHKG.

A GIY-YIG domain is found at 15–92 (TGSGVYQMQD…IKQFRPRYNV (78 aa)). In terms of domain architecture, UVR spans 202 to 237 (DQVIIKLTERMEVTSENLVFEEAAHYRDQIRQLRRL).

This sequence belongs to the UvrC family. Interacts with UvrB in an incision complex.

The protein localises to the cytoplasm. Its function is as follows. The UvrABC repair system catalyzes the recognition and processing of DNA lesions. UvrC both incises the 5' and 3' sides of the lesion. The N-terminal half is responsible for the 3' incision and the C-terminal half is responsible for the 5' incision. This Coxiella burnetii (strain RSA 493 / Nine Mile phase I) protein is UvrABC system protein C.